The primary structure comprises 284 residues: Bifunctional protein FolD 1 (284 aa).

NADP(+) contacts are provided by residues 166 to 168, Ser-191, and Ile-232; that span reads GAS.

It belongs to the tetrahydrofolate dehydrogenase/cyclohydrolase family. Homodimer.

The enzyme catalyses (6R)-5,10-methylene-5,6,7,8-tetrahydrofolate + NADP(+) = (6R)-5,10-methenyltetrahydrofolate + NADPH. It carries out the reaction (6R)-5,10-methenyltetrahydrofolate + H2O = (6R)-10-formyltetrahydrofolate + H(+). It functions in the pathway one-carbon metabolism; tetrahydrofolate interconversion. Functionally, catalyzes the oxidation of 5,10-methylenetetrahydrofolate to 5,10-methenyltetrahydrofolate and then the hydrolysis of 5,10-methenyltetrahydrofolate to 10-formyltetrahydrofolate. The chain is Bifunctional protein FolD 1 from Hydrogenovibrio crunogenus (strain DSM 25203 / XCL-2) (Thiomicrospira crunogena).